A 315-amino-acid polypeptide reads, in one-letter code: Protein FRA10AC1 (315 aa).

Met-1 is subject to N-acetylmethionine. The disordered stretch occupies residues 1-28 (MHGHGGYDSDFSDDERCGESSKRKKRTV). Ser-9 and Ser-12 each carry phosphoserine. At Lys-36 the chain carries N6-acetyllysine. Basic residues predominate over residues 226-235 (EIKSKKRKDK). A disordered region spans residues 226 to 315 (EIKSKKRKDK…FDEYFQDLFL (90 aa)). The segment covering 236-245 (TKKDCEESSH) has biased composition (basic and acidic residues). 5 positions are modified to phosphoserine: Ser-251, Ser-252, Ser-278, Ser-283, and Ser-285. The segment covering 268-278 (KKSEDSLLRNS) has biased composition (basic and acidic residues). The span at 301–315 (SQEEEFDEYFQDLFL) shows a compositional bias: acidic residues.

In terms of assembly, interacts with ESS2. Ubiquitously expressed with higher expression in brain, heart, skeletal muscle, kidney and liver.

Its subcellular location is the nucleus. Functionally, may be involved in pre-mRNA splicing. The protein is Protein FRA10AC1 (FRA10AC1) of Homo sapiens (Human).